A 56-amino-acid polypeptide reads, in one-letter code: Ovomucoid (56 aa).

In terms of domain architecture, Kazal-like spans 6–56 (VDCSDHPKPACLQEQKPLCGSDNKTYDNKCSFCNAVVDSNGTLTLSHFGKC). 3 disulfide bridges follow: Cys8/Cys38, Cys16/Cys35, and Cys24/Cys56. Asn45 carries N-linked (GlcNAc...) asparagine glycosylation.

Its subcellular location is the secreted. The chain is Ovomucoid from Pipile pipile (Trinidad piping guan).